The primary structure comprises 94 residues: MRTIAILAAILLVALQAQAESLQERADEATTQKQSGEDNQDLAISFAGNGLSALRTSGSQARATCYCRTGRCATRESLSGVCEISGRLYRLCCR.

The first 19 residues, 1 to 19 (MRTIAILAAILLVALQAQA), serve as a signal peptide directing secretion. Intrachain disulfides connect cysteine 65–cysteine 93, cysteine 67–cysteine 82, and cysteine 72–cysteine 92.

This sequence belongs to the alpha-defensin family. In terms of assembly, homodimer. Homotetramer. Interacts with B.antracis lef/lethal factor. Glycosylated. In terms of processing, proteolytically cleaved at Arg-62 by trypsin. Both the propeptide form proHD5/HD5(20-94) and HD5(56-94) are cleaved into the lumenal peptide form HD5(63-94) by trypsin. Unprocessed proHD5 exerts antimicrobial activities, but peptide potency is enhanced by peptide processing. Proteolytically cleaved in duodenal fluid; derived fragments are antimicrobially active against commensal bacteria (in vitro). Post-translationally, (Microbial infection) The disulfide bridges and homodimerization are a prerequisite for the enhancement of S.flexneri adhesion and invasion. Expressed in the gastrointestinal, reproductive, and urinary tracts (at protein level). Expressed in Paneth cells of the small intestine (at protein level). Expressed throughout the urothelium of the lower urinary tract and in the collecting tubules of the kidney (at protein level). Expressed in stratified squamous epithelial cells of the female genital tract epithelia, such as in vagina, ectocervix, endocervix, endometrium, and fallopian tube (at protein level). Endometrial expression correlates with stages of the menstrual cycle: Expression is low during the early proliferative phase, increased during the mid- to late proliferative phase, peaks during the early secretory phase of the cycle, and decreases during the mid- to late secretory phase.

The protein localises to the secreted. The protein resides in the cytoplasmic vesicle. It localises to the secretory vesicle. Functionally, host-defense peptide that maintains sterility in the urogenital system. Has antimicrobial activity against a wide range of bacteria, including Gram-negative E.coli, P.aeruginosa and S.typhimurium, and Gram-positive E.aerogenes, S.aureus, B.cereus, E.faecium and L.monocytogenes. Confers resistance to intestinal infection by S.typhimurium. Exhibits antimicrobial activity against enteric commensal bacteria such as B.adolescentis, L.acidophilus, B.breve, L.fermentum, B.longum and S.thermophilus. Binds to bacterial membranes and causes membrane disintegration. Induces the secretion of the chemokine IL-8 by intestinal epithelial cells. Binds to B.antracis lef/lethal factor, a major virulence factor from B.anthracis, and neutralizes its enzymatic activity. In terms of biological role, (Microbial infection) Acts as a target for S.flexneri infection by binding to the bacterium, possibly via bacterial surface proteins, and thereby augmenting infectivity via enhanced bacterial adhesion and invasion of epithelial cells and tissues. The sequence is that of Defensin alpha 5 (DEFA5) from Homo sapiens (Human).